A 130-amino-acid polypeptide reads, in one-letter code: ATP synthase epsilon chain, chloroplastic (130 aa).

The protein belongs to the ATPase epsilon chain family. In terms of assembly, F-type ATPases have 2 components, CF(1) - the catalytic core - and CF(0) - the membrane proton channel. CF(1) has five subunits: alpha(3), beta(3), gamma(1), delta(1), epsilon(1). CF(0) has three main subunits: a, b and c.

The protein localises to the plastid. It is found in the chloroplast thylakoid membrane. In terms of biological role, produces ATP from ADP in the presence of a proton gradient across the membrane. The chain is ATP synthase epsilon chain, chloroplastic from Emiliania huxleyi (Coccolithophore).